A 356-amino-acid polypeptide reads, in one-letter code: MDTSRKIIHIDMDAFYASVEQRDHPEFRGKPLIIGGDPNKRGVVATCSYEARKFGVHSAMPTRQAAKLCPNGIFIHGNMAHYVEVSNQIREIFSRYTDIIEPLSLDEAYLDVTENKKGMKSATMVAREIQQTIYQELGLTASAGVSFNKFIAKIASDFKKPAGITVVTPEEAEAFLEQIPVTKFYGVGKVTAEKLHRLGIETGADLKKWSEWDLIRELHKHGYHLYRHVRGRSNNIVNPHRDRKSVGKETTFEFNVLDSRVLEQSLMQFAKKVEERLIKLQKHGKTVVLKLRYSDFTTITKRLTLNEYTNDASQIYQAAALLLIESYTGQDSIRLIGLTVTNLKPVYFENLRLEGL.

A UmuC domain is found at 1–188 (MDTSRKIIHI…IPVTKFYGVG (188 aa)). The Mg(2+) site is built by aspartate 11 and aspartate 106. Glutamate 107 is a catalytic residue.

The protein belongs to the DNA polymerase type-Y family. In terms of assembly, monomer. The cofactor is Mg(2+).

Its subcellular location is the cytoplasm. The enzyme catalyses DNA(n) + a 2'-deoxyribonucleoside 5'-triphosphate = DNA(n+1) + diphosphate. In terms of biological role, poorly processive, error-prone DNA polymerase involved in untargeted mutagenesis. Copies undamaged DNA at stalled replication forks, which arise in vivo from mismatched or misaligned primer ends. These misaligned primers can be extended by PolIV. Exhibits no 3'-5' exonuclease (proofreading) activity. May be involved in translesional synthesis, in conjunction with the beta clamp from PolIII. The protein is DNA polymerase IV of Listeria monocytogenes serovar 1/2a (strain ATCC BAA-679 / EGD-e).